A 323-amino-acid chain; its full sequence is 1-aminocyclopropane-1-carboxylate oxidase 4 (323 aa).

Position 1 is an N-acetylmethionine (M1). The region spanning P153 to P254 is the Fe2OG dioxygenase domain. The Fe cation site is built by H177, D179, and H234. R245 serves as a coordination point for 2-oxoglutarate.

The protein belongs to the iron/ascorbate-dependent oxidoreductase family. Fe cation is required as a cofactor. As to expression, expressed in vegetative tissues. Expressed constitutively at a low level in leaves and blades.

The catalysed reaction is 1-aminocyclopropane-1-carboxylate + L-ascorbate + O2 = ethene + L-dehydroascorbate + hydrogen cyanide + CO2 + 2 H2O. It participates in alkene biosynthesis; ethylene biosynthesis via S-adenosyl-L-methionine; ethylene from S-adenosyl-L-methionine: step 2/2. In terms of biological role, enzyme involved in the ethylene biosynthesis. May promote stem elongation by maximizing the extensibility cells, possibly by activating ethylene biosynthesis, in response to very-long-chain fatty acids (VLCFAs C20:0 to C30:0). The sequence is that of 1-aminocyclopropane-1-carboxylate oxidase 4 (ACO4) from Arabidopsis thaliana (Mouse-ear cress).